A 199-amino-acid chain; its full sequence is NAD(P)H dehydrogenase (quinone) (199 aa).

The region spanning 4–190 is the Flavodoxin-like domain; that stretch reads ILVLYYSMYG…TIARYQGEHV (187 aa). Residues 10-15 and 79-81 each bind FMN; these read SMYGHI and TRF. Tyr-12 contacts NAD(+). Residue Trp-99 participates in substrate binding. FMN is bound by residues 114–119 and His-134; that span reads STGTGG.

It belongs to the WrbA family. The cofactor is FMN.

It catalyses the reaction a quinone + NADH + H(+) = a quinol + NAD(+). The enzyme catalyses a quinone + NADPH + H(+) = a quinol + NADP(+). In Serratia proteamaculans (strain 568), this protein is NAD(P)H dehydrogenase (quinone).